A 208-amino-acid polypeptide reads, in one-letter code: Proheparin-binding EGF-like growth factor (208 aa).

The signal sequence occupies residues 1–23 (MKLLPSVMLKLFLAAVLSALVTG). A propeptide spanning residues 24-62 (ESLERLRRGLAAATSNPDPPTGSTNQLLPTGGDRAQGVQ) is cleaved from the precursor. Over 24–160 (ESLERLRRGL…ENPLYTYDHT (137 aa)) the chain is Extracellular. 2 disordered regions span residues 35–57 (AATS…GGDR) and 80–104 (PQGL…LGKK). Residues 36–51 (ATSNPDPPTGSTNQLL) show a composition bias toward polar residues. Thr85 carries an O-linked (GalNAc...) threonine glycan. Positions 91–102 (NGKKKKKGKGLG) are enriched in basic residues. Residues 104-144 (KRDPCLRKYKDYCIHGECRYLQEFRTPSCKCLPGYHGHRCH) enclose the EGF-like domain. Disulfide bonds link Cys108–Cys121, Cys116–Cys132, and Cys134–Cys143. Residues 149–208 (PVENPLYTYDHTTVLAVVAVVLSSVCLLVIVGLLMFRYHRRGGYDLESEEKVKLGVASSH) constitute a propeptide, C-terminal. Residues 161 to 184 (TVLAVVAVVLSSVCLLVIVGLLMF) traverse the membrane as a helical segment. Residues 185–208 (RYHRRGGYDLESEEKVKLGVASSH) are Cytoplasmic-facing.

As to quaternary structure, interacts with FBLN1. Interacts with EGFR and ERBB4. O-glycosylated. As to expression, most abundant in kidney, skeletal muscle, lung, spleen, brain and heart.

The protein resides in the secreted. Its subcellular location is the extracellular space. It localises to the cell membrane. In terms of biological role, growth factor that mediates its effects via EGFR, ERBB2 and ERBB4. Required for normal cardiac valve formation and normal heart function. Promotes smooth muscle cell proliferation. May be involved in macrophage-mediated cellular proliferation. It is mitogenic for fibroblasts, but not endothelial cells. It is able to bind EGF receptor/EGFR with higher affinity than EGF itself and is a far more potent mitogen for smooth muscle cells than EGF. Also acts as a diphtheria toxin receptor. This Mus musculus (Mouse) protein is Proheparin-binding EGF-like growth factor (Hbegf).